The chain runs to 61 residues: MAEVRVGENESLDSALRRFRRQCSKAGVLSELRKREHYESPSVKRKKKAEAARKRKYKYGR.

Positions 36–61 (EHYESPSVKRKKKAEAARKRKYKYGR) are disordered. Basic residues predominate over residues 43-61 (VKRKKKAEAARKRKYKYGR).

It belongs to the bacterial ribosomal protein bS21 family.

This chain is Small ribosomal subunit protein bS21 (rpsU), found in Caldanaerobacter subterraneus subsp. tengcongensis (strain DSM 15242 / JCM 11007 / NBRC 100824 / MB4) (Thermoanaerobacter tengcongensis).